Reading from the N-terminus, the 414-residue chain is E3 ubiquitin-protein ligase makorin-2 (414 aa).

2 C3H1-type zinc fingers span residues 2–29 and 31–58; these read STKQVTCRYFLHGVCREGSRCLFSHDLT and SKPSTICKYYQRGACAYGDRCRYDHIKP. A disordered region spans residues 57–94; that stretch reads KPPGRGSGAPADHSNRSSSSAGASAPGPGPPANTSKHL. Residues 73 to 82 show a composition bias toward low complexity; it reads SSSSAGASAP. The C3H1-type 3 zinc finger occupies 164 to 191; sequence QTSPQICPFLAAGQCQYGESCPYLHGEM. Positions 192 to 221 are makorin-type Cys-His; that stretch reads CEICRQHVLHPHDPEQRAAHEKKCMVAFEM. Residues 237–291 form an RING-type zinc finger; that stretch reads CKICLDVVYEKSSPSERRFGILSSCAHTYCLNCIRQWRCVEQLHNQIRKSCPECR. A C3H1-type 4 zinc finger spans residues 320-349; it reads GVSKKACKYFDQGRGTCPFGGKCFYMHAYA.

The protein localises to the cytoplasm. It localises to the nucleus. It carries out the reaction S-ubiquitinyl-[E2 ubiquitin-conjugating enzyme]-L-cysteine + [acceptor protein]-L-lysine = [E2 ubiquitin-conjugating enzyme]-L-cysteine + N(6)-ubiquitinyl-[acceptor protein]-L-lysine.. It functions in the pathway protein modification; protein ubiquitination. E3 ubiquitin ligase catalyzing the covalent attachment of ubiquitin moieties onto substrate proteins. Inhibits neurogenesis and axis formation during embryonic development by modulating the phosphatidylinositol 3-kinase (PI3K) pathway. Acts downstream of PI3K and akt1 to up-regulate gsk3b mRNA expression. The polypeptide is E3 ubiquitin-protein ligase makorin-2 (mkrn2) (Danio rerio (Zebrafish)).